The following is a 365-amino-acid chain: Galactoside alpha-(1,2)-fucosyltransferase 1 (365 aa).

Over 1–8 (MWPLSHRH) the chain is Cytoplasmic. Residues 9 to 25 (LCLAFLLVCVLSAISFF) traverse the membrane as a helical; Signal-anchor for type II membrane protein segment. Residues 26 to 365 (LHIYQDSIRH…LSSLWTLAEP (340 aa)) lie on the Lumenal side of the membrane. N65, N301, and N327 each carry an N-linked (GlcNAc...) asparagine glycan.

Belongs to the glycosyltransferase 11 family.

It localises to the golgi apparatus. Its subcellular location is the golgi stack membrane. It catalyses the reaction a beta-D-galactosyl-(1-&gt;4)-N-acetyl-beta-D-glucosaminyl derivative + GDP-beta-L-fucose = an alpha-L-Fuc-(1-&gt;2)-beta-D-Gal-(1-&gt;4)-beta-D-GlcNAc derivative + GDP + H(+). It carries out the reaction a ganglioside GA1 + GDP-beta-L-fucose = a ganglioside Fuc-GA1 + GDP + H(+). The enzyme catalyses a beta-D-Gal-(1-&gt;3)-beta-D-GlcNAc-(1-&gt;3)-beta-D-Gal-(1-&gt;4)-beta-D-Glc-(1&lt;-&gt;1')-Cer(d18:1(4E)) + GDP-beta-L-fucose = alpha-L-fucosyl-(1-&gt;2)- beta-D-galactosyl-(1-&gt;3)-N-acetyl-beta-D-glucosaminyl-(1-&gt;3)-beta-D-galactosyl-(1-&gt;4)-beta-D-glucosyl-(1&lt;-&gt;1')-N-acylsphing-4-enine + GDP + H(+). The catalysed reaction is a neolactoside nLc4Cer(d18:1(4E)) + GDP-beta-L-fucose = a neolactoside IV(2)-alpha-Fuc-nLc4Cer(d18:1(4E)) + GDP + H(+). It catalyses the reaction a ganglioside GM1 + GDP-beta-L-fucose = a ganglioside Fuc-GM1 + GDP + H(+). It carries out the reaction beta-D-galactosyl-(1-&gt;3)-N-acetyl-D-galactosamine + GDP-beta-L-fucose = alpha-L-fucosyl-(1-&gt;2)-beta-D-galactosyl-(1-&gt;3)-N-acetyl-D-galactosamine + GDP + H(+). It participates in protein modification; protein glycosylation. In terms of biological role, catalyzes the transfer of L-fucose, from a guanosine diphosphate-beta-L-fucose, to the terminal galactose residue of glycoconjugates through an alpha(1,2) linkage leading to H antigen synthesis that is an intermediate substrate in the synthesis of ABO blood group antigens. H antigen is essential for maturation of the glomerular layer of the main olfactory bulb, in cell migration and early cell-cell contacts during tumor associated angiogenesis. Preferentially fucosylates soluble lactose and to a lesser extent fucosylates glycolipids gangliosides GA1 and GM1a. The polypeptide is Galactoside alpha-(1,2)-fucosyltransferase 1 (Leontocebus fuscicollis (Brown-mantled tamarin)).